The chain runs to 265 residues: Glutamate racemase (265 aa).

Substrate is bound by residues 12 to 13 and 44 to 45; these read DS and YG. Cys75 (proton donor/acceptor) is an active-site residue. 76 to 77 contacts substrate; the sequence is NT. Cys186 (proton donor/acceptor) is an active-site residue. 187–188 contributes to the substrate binding site; sequence TH.

This sequence belongs to the aspartate/glutamate racemases family.

The enzyme catalyses L-glutamate = D-glutamate. Its pathway is cell wall biogenesis; peptidoglycan biosynthesis. Provides the (R)-glutamate required for cell wall biosynthesis. The protein is Glutamate racemase of Pseudomonas aeruginosa (strain ATCC 15692 / DSM 22644 / CIP 104116 / JCM 14847 / LMG 12228 / 1C / PRS 101 / PAO1).